The sequence spans 232 residues: Histone H1.X (232 aa).

The region spanning 36–112 is the H15 domain; that stretch reads HHPSYMDMIK…GATGSFRMGK (77 aa). Residues 142 to 232 are disordered; that stretch reads ISKAEKTKPS…LRTGTRKSYC (91 aa). Over residues 159–197 the composition is skewed to basic residues; sequence KKGKPISTMKKRGVMSKKRSSKNKMAPKAKSHGLKKKGP.

This sequence belongs to the histone H1/H5 family.

The protein localises to the nucleus. The protein resides in the chromosome. The protein is Histone H1.X (hil-1) of Caenorhabditis elegans.